The sequence spans 403 residues: Peroxisomal membrane protein PEX13 (403 aa).

The span at 1–11 (MASQPPPPPKP) shows a compositional bias: pro residues. A disordered region spans residues 1–68 (MASQPPPPPK…PSQQTGSSSV (68 aa)). Over 1–134 (MASQPPPPPK…SSRGAFQSIE (134 aa)) the chain is Peroxisomal matrix. The span at 59 to 68 (PSQQTGSSSV) shows a compositional bias: polar residues. Residues 135 to 155 (SIVHAFASVSMMMDATFSAVY) form a helical membrane-spanning segment. Residues 145–233 (MMMDATFSAV…EDRAATSAKS (89 aa)) are targeting to peroxisomes. The Cytoplasmic portion of the chain corresponds to 156 to 174 (NSFRAVLDVANHFSRLKIH). Residues 175–192 (FTKVFSAFALVRTIRYLY) traverse the membrane as a helical segment. The interaction with PEX19 stretch occupies residues 175-196 (FTKVFSAFALVRTIRYLYRRLQ). Residues 193-233 (RRLQRMLGLRRGSENEDLWAESEGTVACLGAEDRAATSAKS) lie on the Peroxisomal matrix side of the membrane. The helical transmembrane segment at 234 to 254 (WPIFLFFAVILGGPYLIWKLL) threads the bilayer. The Cytoplasmic segment spans residues 255-403 (STHSDEVTDS…IGKDGEKQDL (149 aa)). One can recognise an SH3 domain in the interval 272 to 336 (DDHVVARAEY…PANYVKILGK (65 aa)). Ser354 is subject to Phosphoserine.

It belongs to the peroxin-13 family. Interacts (via SH3 domain) with PEX14 (via SH3-binding motif); forming the PEX13-PEX14 docking complex. Interacts with PEX19.

It localises to the peroxisome membrane. Functionally, component of the PEX13-PEX14 docking complex, a translocon channel that specifically mediates the import of peroxisomal cargo proteins bound to PEX5 receptor. The PEX13-PEX14 docking complex forms a large import pore which can be opened to a diameter of about 9 nm. Mechanistically, PEX5 receptor along with cargo proteins associates with the PEX14 subunit of the PEX13-PEX14 docking complex in the cytosol, leading to the insertion of the receptor into the organelle membrane with the concomitant translocation of the cargo into the peroxisome matrix. Involved in the import of PTS1- and PTS2-type containing proteins. This chain is Peroxisomal membrane protein PEX13, found in Homo sapiens (Human).